The chain runs to 130 residues: Large ribosomal subunit protein bL21 (130 aa).

The disordered stretch occupies residues Thr110–Glu130.

Belongs to the bacterial ribosomal protein bL21 family. As to quaternary structure, part of the 50S ribosomal subunit. Contacts protein L20.

This protein binds to 23S rRNA in the presence of protein L20. This chain is Large ribosomal subunit protein bL21, found in Nostoc sp. (strain PCC 7120 / SAG 25.82 / UTEX 2576).